Here is a 962-residue protein sequence, read N- to C-terminus: Glutamate receptor 1 (962 aa).

Residues 1-25 (MFSSFSFLNMFGVLFTVFNLTVVQP) form the signal peptide. Residues 26–591 (YPSHIIIKSF…SVFSFMQPLS (566 aa)) are Extracellular-facing. N-linked (GlcNAc...) asparagine glycosylation is found at Asn190, Asn220, Asn275, Asn333, Asn441, and Asn482. Residues 592–612 (TEIWMYIIFAYIGVSVVIFLV) traverse the membrane as a helical segment. Topologically, residues 613 to 668 (SRFSPYEWRVEETSRGGFTISNDFSVYNCLWFTLAAFMQQGTDILPRSISGRIASS) are cytoplasmic. A helical transmembrane segment spans residues 669-689 (AWWFFTMIIVSSYTANLAAFL). Topologically, residues 690–855 (TLEKMQAPIE…GSSASLNLSK (166 aa)) are extracellular. N-linked (GlcNAc...) asparagine glycosylation occurs at Asn852. Residues 856–876 (VAGIFYILMGGMVISMLAALG) form a helical membrane-spanning segment. Residues 877-962 (EFLYRSRIEA…PANTLYNTAV (86 aa)) lie on the Cytoplasmic side of the membrane.

This sequence belongs to the glutamate-gated ion channel (TC 1.A.10.1) family. As to quaternary structure, interacts with sol-1. Interacts with cni-1; the interaction negatively regulates export of glr-1 from the endoplasmic reticulum to synapses. Interacts with usp-46; the interaction results in deubiquitination of glr-1. In terms of processing, ubiquitinated. Deubiquitinated by usp-46 which prevents its degradation. Glycosylated. In terms of tissue distribution, command interneurons of the locomotory control circuit (AIB, AVA, AVB, AVD, AVE and PVC) and motor neurons (RMD, RIM, SMD, AVG, PVQ and URY).

The protein resides in the postsynaptic cell membrane. The protein localises to the endoplasmic reticulum. It is found in the synapse. Its subcellular location is the cell membrane. It localises to the recycling endosome. The protein resides in the cell projection. The protein localises to the dendrite. It is found in the perikaryon. Non-NMDA (N-methyl-D-aspartate) ionotropic glutamate receptor. L-glutamate acts as an excitatory neurotransmitter at many synapses in the central nervous system. The postsynaptic actions of glutamate are mediated by a variety of receptors that are named according to their selective agonists. May contribute to a sensory discrimination between mechanical and chemical stimuli. Plays a role in controlling movement in response to environmental cues such as food availability and mechanosensory stimulation such as the nose touch response. In AIB interneurons, promotes omega turns, a movement that frequently follows backwards locomotion or 'reversals' in response to environmental cues while possibly playing an inhibitory role in alternative neurons to inhibit omega turns. The chain is Glutamate receptor 1 from Caenorhabditis elegans.